Reading from the N-terminus, the 1018-residue chain is Fibronectin-binding protein A (1018 aa).

A signal peptide spans 1–36 (MKNNLRYGIRKHKLGAASVFLGTMIVVGMGQDKEAA). The short motif at 7–18 (YGIRKHKLGAAS) is the YSIRK-G/S signaling motif element. The ligand-binding A region stretch occupies residues 37 to 511 (ASEQKTTTVE…SNKANGNGKN (475 aa)). Disordered stretches follow at residues 38-61 (SEQK…SETQ) and 78-195 (ATVT…ETGT). 2 stretches are compositionally biased toward polar residues: residues 39-61 (EQKT…SETQ) and 78-92 (ATVT…QVTT). A compositionally biased stretch (basic and acidic residues) spans 112-126 (TVKEEVVKEEAKPQV). Residues 129-139 (TTQSQDNSGDQ) are compositionally biased toward polar residues. Residues 194 to 511 (GTDVTSKVTV…SNKANGNGKN (318 aa)) are fibrinogen/elastin/tropoelastin-binding. Positions 512–872 (GPIIQNNKFE…EGQQTIEEDT (361 aa)) are fibronectin-binding. Residues 545 to 574 (EEYDSSTLDIDYHTAIDGGGGYVDGYIETI) form a B-1 repeat. Residues 545-604 (EEYDSSTLDIDYHTAIDGGGGYVDGYIETIEETDSSAIDIDYHTAVDSEAGHVGGYTESS) are 2 X approximate tandem repeats. One copy of the B-2 repeat lies at 575–604 (EETDSSAIDIDYHTAVDSEAGHVGGYTESS). Disordered stretches follow at residues 595 to 622 (GHVG…NSKH), 740 to 813 (LGYE…DIDF), and 827 to 997 (EIIE…GMLF). A D-1 repeat occupies 745 to 782 (GQNSGNQSFEEDTEEDKPKYEQGGNIVDIDFDSVPQIH). Positions 745 to 878 (GQNSGNQSFE…EEDTTPPIVP (134 aa)) are 4 X approximate tandem repeats. One copy of the D-2 repeat lies at 783 to 820 (GQNKGNQSFEEDTEKDKPKYEHGGNIIDIDFDSVPHIH). A D-3 repeat occupies 821 to 859 (GFNKHTEIIEEDTNKDKPSYQFGGHNSVDFEEDTLPKVS). The span at 827 to 838 (EIIEEDTNKDKP) shows a compositional bias: basic and acidic residues. Residues 860 to 878 (GQNEGQQTIEEDTTPPIVP) form a D-4; truncated repeat. A compositionally biased stretch (pro residues) spans 875 to 938 (PIVPPTPPTP…PAEPGKPVPP (64 aa)). 5 WR repeats span residues 879 to 892 (PTPP…EPET), 893 to 906 (PTPP…EPET), 907 to 920 (PTPP…EPET), 921 to 934 (PTPP…EPGK), and 935 to 948 (PVPP…KPSK). Residues 879-948 (PTPPTPEVPS…AKEEPKKPSK (70 aa)) are 5 X tandem repeats, Pro-rich (WR). The LPXTG sorting signal signature appears at 982–986 (LPETG). Pentaglycyl murein peptidoglycan amidated threonine is present on threonine 985. Residues 986-1018 (GGEESTNKGMLFGGLFSILGLALLRRNKKNHKA) constitute a propeptide, removed by sortase.

It localises to the secreted. Its subcellular location is the cell wall. Its function is as follows. Promotes bacterial attachment to multiple substrates, such as fibronectin (Fn), fibrinogen (Fg), elastin peptides and tropoelastin. This confers to S.aureus the ability to invade endothelial cells. Promotes adherence to and aggregation of activated platelets. The chain is Fibronectin-binding protein A from Staphylococcus aureus (strain USA300).